The chain runs to 264 residues: Sulfur carrier protein FdhD (264 aa).

Cys107 serves as the catalytic Cysteine persulfide intermediate.

This sequence belongs to the FdhD family.

The protein localises to the cytoplasm. Functionally, required for formate dehydrogenase (FDH) activity. Acts as a sulfur carrier protein that transfers sulfur from IscS to the molybdenum cofactor prior to its insertion into FDH. In Staphylococcus haemolyticus (strain JCSC1435), this protein is Sulfur carrier protein FdhD.